Here is a 386-residue protein sequence, read N- to C-terminus: Tubulin beta-1 chain (386 aa).

GTP is bound by residues E7, S76, G80, T81, G82, N142, and N164. E7 lines the Mg(2+) pocket. Residues 363 to 386 form a disordered region; that stretch reads YQDATADEEGEYEDEEEDLQAEDM. Residues 367–386 are compositionally biased toward acidic residues; that stretch reads TADEEGEYEDEEEDLQAEDM.

This sequence belongs to the tubulin family. In terms of assembly, dimer of alpha and beta chains. A typical microtubule is a hollow water-filled tube with an outer diameter of 25 nm and an inner diameter of 15 nM. Alpha-beta heterodimers associate head-to-tail to form protofilaments running lengthwise along the microtubule wall with the beta-tubulin subunit facing the microtubule plus end conferring a structural polarity. Microtubules usually have 13 protofilaments but different protofilament numbers can be found in some organisms and specialized cells. It depends on Mg(2+) as a cofactor.

Its subcellular location is the cytoplasm. It is found in the cytoskeleton. Tubulin is the major constituent of microtubules, a cylinder consisting of laterally associated linear protofilaments composed of alpha- and beta-tubulin heterodimers. Microtubules grow by the addition of GTP-tubulin dimers to the microtubule end, where a stabilizing cap forms. Below the cap, tubulin dimers are in GDP-bound state, owing to GTPase activity of alpha-tubulin. The sequence is that of Tubulin beta-1 chain (TUBB1) from Avena sativa (Oat).